The chain runs to 316 residues: tRNA dimethylallyltransferase (316 aa).

17 to 24 serves as a coordination point for ATP; sequence GPTASGKT. Residue 19–24 participates in substrate binding; the sequence is TASGKT. Interaction with substrate tRNA regions lie at residues 42-45, 166-170, 247-252, and 280-287; these read DSAL, QRLSR, RCVGYR, and KRQITWLR.

The protein belongs to the IPP transferase family. Monomer. It depends on Mg(2+) as a cofactor.

It carries out the reaction adenosine(37) in tRNA + dimethylallyl diphosphate = N(6)-dimethylallyladenosine(37) in tRNA + diphosphate. In terms of biological role, catalyzes the transfer of a dimethylallyl group onto the adenine at position 37 in tRNAs that read codons beginning with uridine, leading to the formation of N6-(dimethylallyl)adenosine (i(6)A). In Escherichia coli O127:H6 (strain E2348/69 / EPEC), this protein is tRNA dimethylallyltransferase.